Reading from the N-terminus, the 53-residue chain is ATP synthase protein 8 (53 aa).

The chain crosses the membrane as a helical span at residues 6–26; sequence PIGWLSLFIIFSLTFILFSMM.

This sequence belongs to the ATPase protein 8 family. In terms of assembly, F-type ATPases have 2 components, CF(1) - the catalytic core - and CF(0) - the membrane proton channel.

The protein localises to the mitochondrion membrane. Mitochondrial membrane ATP synthase (F(1)F(0) ATP synthase or Complex V) produces ATP from ADP in the presence of a proton gradient across the membrane which is generated by electron transport complexes of the respiratory chain. F-type ATPases consist of two structural domains, F(1) - containing the extramembraneous catalytic core and F(0) - containing the membrane proton channel, linked together by a central stalk and a peripheral stalk. During catalysis, ATP synthesis in the catalytic domain of F(1) is coupled via a rotary mechanism of the central stalk subunits to proton translocation. Part of the complex F(0) domain. Minor subunit located with subunit a in the membrane. The chain is ATP synthase protein 8 (mt:ATPase8) from Ceratitis capitata (Mediterranean fruit fly).